The following is a 215-amino-acid chain: Outer-membrane lipoprotein carrier protein (215 aa).

Positions 1-24 (MFVLKARHLMAAGLVSLAAWSAGA) are cleaved as a signal peptide.

Belongs to the LolA family. In terms of assembly, monomer.

The protein localises to the periplasm. Its function is as follows. Participates in the translocation of lipoproteins from the inner membrane to the outer membrane. Only forms a complex with a lipoprotein if the residue after the N-terminal Cys is not an aspartate (The Asp acts as a targeting signal to indicate that the lipoprotein should stay in the inner membrane). This Ralstonia nicotianae (strain ATCC BAA-1114 / GMI1000) (Ralstonia solanacearum) protein is Outer-membrane lipoprotein carrier protein.